Consider the following 429-residue polypeptide: Histidine--tRNA ligase (429 aa).

It belongs to the class-II aminoacyl-tRNA synthetase family. In terms of assembly, homodimer.

The protein localises to the cytoplasm. It carries out the reaction tRNA(His) + L-histidine + ATP = L-histidyl-tRNA(His) + AMP + diphosphate + H(+). This is Histidine--tRNA ligase from Corynebacterium efficiens (strain DSM 44549 / YS-314 / AJ 12310 / JCM 11189 / NBRC 100395).